The chain runs to 100 residues: Small ribosomal subunit protein uS14c (100 aa).

Belongs to the universal ribosomal protein uS14 family. In terms of assembly, part of the 30S ribosomal subunit.

Its subcellular location is the plastid. It is found in the chloroplast. Its function is as follows. Binds 16S rRNA, required for the assembly of 30S particles. This Zygnema circumcarinatum (Green alga) protein is Small ribosomal subunit protein uS14c.